The chain runs to 112 residues: C-X-C motif chemokine 6 (112 aa).

The first 36 residues, 1–36 (MRLLSSRAARVSGPSGSLCALLALLLLTPPGPLASA), serve as a signal peptide directing secretion. Intrachain disulfides connect Cys48-Cys74 and Cys50-Cys90.

This sequence belongs to the intercrine alpha (chemokine CxC) family.

It is found in the secreted. Chemotactic for neutrophil granulocytes. Signals through binding and activation of its receptors (CXCR1 and CXCR2). In addition to its chemotactic and angiogenic properties, it has strong antibacterial activity against Gram-positive and Gram-negative bacteria (90-fold-higher when compared to CXCL5 and CXCL7). This Bos taurus (Bovine) protein is C-X-C motif chemokine 6 (CXCL6).